Here is an 847-residue protein sequence, read N- to C-terminus: Ras GTPase-activating protein 2 (847 aa).

Over residues 1–21 the composition is skewed to low complexity; that stretch reads MAAAAPAAAASPEAPAVSGSA. The segment at 1-31 is disordered; the sequence is MAAAAPAAAASPEAPAVSGSADPETGDEDSR. Residue Ala2 is modified to N-acetylalanine. C2 domains follow at residues 19 to 137 and 148 to 288; these read GSAD…ETWF and VQGK…QAWY. Positions 371 to 588 constitute a Ras-GAP domain; it reads NKLVPFITAV…TDVKKFLDEI (218 aa). Ser554 carries the post-translational modification Phosphoserine. A PH domain is found at 603 to 704; that stretch reads VHLKEGEMYK…WIDVLCRVSR (102 aa). The Btk-type zinc finger occupies 706 to 742; it reads NHNRLSSFHPSAYLNGNWLCCQETSESTPGCKPCTAG. The Zn(2+) site is built by His714, Cys725, Cys726, and Cys736. The disordered stretch occupies residues 819–847; it reads DEPHEKYRKKRSSSAKYGSKENPIVGKIS.

The protein resides in the cell membrane. Functionally, inhibitory regulator of the Ras-cyclic AMP pathway. Binds inositol tetrakisphosphate (IP4) and phospholipids. The polypeptide is Ras GTPase-activating protein 2 (Rasa2) (Mus musculus (Mouse)).